The sequence spans 348 residues: Protein pelota homolog (348 aa).

The protein belongs to the eukaryotic release factor 1 family. Pelota subfamily. Monomer. A divalent metal cation serves as cofactor.

Its subcellular location is the cytoplasm. May function in recognizing stalled ribosomes, interact with stem-loop structures in stalled mRNA molecules, and effect endonucleolytic cleavage of the mRNA. May play a role in the release non-functional ribosomes and degradation of damaged mRNAs. Has endoribonuclease activity. The polypeptide is Protein pelota homolog (Methanococcus maripaludis (strain C6 / ATCC BAA-1332)).